Reading from the N-terminus, the 55-residue chain is uncharacterized protein (55 aa).

This is an uncharacterized protein from Salmonella typhimurium (strain LT2 / SGSC1412 / ATCC 700720).